Reading from the N-terminus, the 349-residue chain is N-formyl peptide receptor 3 (349 aa).

Topologically, residues 1-27 (METNFSIPLNETEEVLPEPAGHTVLWI) are extracellular. N-linked (GlcNAc...) asparagine glycosylation is found at asparagine 4 and asparagine 10. The chain crosses the membrane as a helical span at residues 28–50 (FSLLVHGVTFIFGVLGNGLVIWV). Residues 51–61 (AGFLMTRTVNT) lie on the Cytoplasmic side of the membrane. Residues 62 to 83 (ICYLNLALADFSFSAILPFHMV) form a helical membrane-spanning segment. Residues 84 to 100 (SVAMREKWPFGSFLCKL) lie on the Extracellular side of the membrane. An intrachain disulfide couples cysteine 98 to cysteine 176. The helical transmembrane segment at 101–121 (VHVMIDINLFVSVYLITIIAL) threads the bilayer. Residues 122–140 (DRCICVLHPAWAQNHRTMS) are Cytoplasmic-facing. A helical transmembrane segment spans residues 141 to 162 (LAKRVMTGLWILTIVLTLPNFI). Over 163-205 (FWTTISTTNGDTYCIFNFPFWGDTAVERLNVFITMAKVFLILH) the chain is Extracellular. The helical transmembrane segment at 206–226 (FIIGFSMPMSIITVCYGIIAA) threads the bilayer. Residues 227–242 (KIHRNHMIKSSRPLRV) lie on the Cytoplasmic side of the membrane. The helical transmembrane segment at 243–266 (FAAVVASFFICWFPYELIGILMAV) threads the bilayer. The Extracellular portion of the chain corresponds to 267–286 (WLKEMLLNGKYKIILVLINP). Residues 287–306 (TSSLAFFNSCLNPILYVFLG) traverse the membrane as a helical segment. Over 307–349 (SNFQERLIRSLPTSLERALTEVPDSAQTSNTHTTSASPPEETE) the chain is Cytoplasmic. A disordered region spans residues 327–349 (EVPDSAQTSNTHTTSASPPEETE). Polar residues predominate over residues 331–343 (SAQTSNTHTTSAS).

This sequence belongs to the G-protein coupled receptor 1 family.

Its subcellular location is the cell membrane. Its function is as follows. Low affinity receptor for N-formyl-methionyl peptides, which are powerful neutrophils chemotactic factors. Binding of FMLP to the receptor causes activation of neutrophils. This response is mediated via a G-protein that activates a phosphatidylinositol-calcium second messenger system. In Gorilla gorilla gorilla (Western lowland gorilla), this protein is N-formyl peptide receptor 3 (FPR3).